The following is a 184-amino-acid chain: uncharacterized protein (184 aa).

A 4Fe-4S domain is found at 72–135 (RKSQAILLIG…GIALGSAVKV (64 aa)). The [4Fe-4S] cluster site is built by Cys92, Cys95, Cys100, and Cys118.

Requires [4Fe-4S] cluster as cofactor.

This is an uncharacterized protein from Archaeoglobus fulgidus (strain ATCC 49558 / DSM 4304 / JCM 9628 / NBRC 100126 / VC-16).